We begin with the raw amino-acid sequence, 56 residues long: Large ribosomal subunit protein bL32 (56 aa).

A compositionally biased stretch (basic residues) spans 1-16 (MAVQKSKKSRSMRGMR). The interval 1–22 (MAVQKSKKSRSMRGMRRSHDAL) is disordered.

The protein belongs to the bacterial ribosomal protein bL32 family.

This chain is Large ribosomal subunit protein bL32, found in Aliivibrio salmonicida (strain LFI1238) (Vibrio salmonicida (strain LFI1238)).